Consider the following 106-residue polypeptide: NADH dehydrogenase [ubiquinone] 1 beta subcomplex subunit 10-B (106 aa).

The interval 1-25 (MGRKKGLPEFEESAPDGFDPENPYK) is disordered.

It belongs to the complex I NDUFB10 subunit family. As to quaternary structure, complex I is composed of at least 49 different subunits.

The protein localises to the mitochondrion inner membrane. Functionally, accessory subunit of the mitochondrial membrane respiratory chain NADH dehydrogenase (Complex I), that is believed not to be involved in catalysis. Complex I functions in the transfer of electrons from NADH to the respiratory chain. The immediate electron acceptor for the enzyme is believed to be ubiquinone. In Arabidopsis thaliana (Mouse-ear cress), this protein is NADH dehydrogenase [ubiquinone] 1 beta subcomplex subunit 10-B.